The primary structure comprises 337 residues: Hsp90 co-chaperone Cdc37-like 1 (337 aa).

Pro residues predominate over residues 1 to 11 (MEQPWPPPGPW). The tract at residues 1–43 (MEQPWPPPGPWSLPRAEGEAEEESDLDLSPGSPRCPQLPGGGT) is disordered. The interval 2–171 (EQPWPPPGPW…HEQKIRHFGM (170 aa)) is self-association. Ser-32 and Ser-88 each carry phosphoserine. Residues 84 to 122 (HNSESLDQEHAKAQTAISELRQREEEWRQKEEALVQRER) are a coiled coil. The self-association and interaction with Hsp90 stretch occupies residues 147 to 277 (KETEDEDKSK…SRVRLYSQSP (131 aa)). The interaction with Hsp70 stretch occupies residues 267–337 (KSRVRLYSQS…DDEPKMMDTV (71 aa)). The segment at 278–337 (NFQPVTVQNHVPHSGVGSIGLLESLPQNPDYLQYSINTALCSLNSVVHKEDDEPKMMDTV) is required for interaction with STIP1.

Belongs to the CDC37 family. As to quaternary structure, self-associates. Forms complexes with Hsp70 and Hsp90. Interacts with CDC37, FKBP4, PPID and STIP1.

It is found in the cytoplasm. In terms of biological role, co-chaperone that binds to numerous proteins and promotes their interaction with Hsp70 and Hsp90. In Bos taurus (Bovine), this protein is Hsp90 co-chaperone Cdc37-like 1 (CDC37L1).